A 332-amino-acid chain; its full sequence is Large ribosomal subunit protein mL44 (332 aa).

A mitochondrion-targeting transit peptide spans 1–30 (MASGLVRLLQQGHRCLLAPVAPKLVPPVRG). Residues 86–228 (DLLKTAFVNS…LITQMTGKEL (143 aa)) enclose the RNase III domain. The DRBM domain maps to 236 to 306 (NPMGLLVEEL…ARVALRKLYG (71 aa)).

This sequence belongs to the ribonuclease III family. Mitochondrion-specific ribosomal protein mL44 subfamily. As to quaternary structure, component of the mitochondrial large ribosomal subunit (mt-LSU). Mature mammalian 55S mitochondrial ribosomes consist of a small (28S) and a large (39S) subunit. The 28S small subunit contains a 12S ribosomal RNA (12S mt-rRNA) and 30 different proteins. The 39S large subunit contains a 16S rRNA (16S mt-rRNA), a copy of mitochondrial valine transfer RNA (mt-tRNA(Val)), which plays an integral structural role, and 52 different proteins.

The protein localises to the mitochondrion. Component of the 39S subunit of mitochondrial ribosome. May have a function in the assembly/stability of nascent mitochondrial polypeptides exiting the ribosome. This is Large ribosomal subunit protein mL44 (MRPL44) from Homo sapiens (Human).